The chain runs to 250 residues: Putative ABC transporter ATP-binding protein YjkB (250 aa).

In terms of domain architecture, ABC transporter spans 13 to 245 (ISFRSVRKSY…PQHEAAKEFL (233 aa)). 49–56 (GPSGSGKS) contributes to the ATP binding site.

It belongs to the ABC transporter superfamily.

This is Putative ABC transporter ATP-binding protein YjkB (yjkB) from Bacillus subtilis (strain 168).